Reading from the N-terminus, the 349-residue chain is Phosphoribosylformylglycinamidine cyclo-ligase (349 aa).

The protein belongs to the AIR synthase family.

The protein resides in the cytoplasm. It catalyses the reaction 2-formamido-N(1)-(5-O-phospho-beta-D-ribosyl)acetamidine + ATP = 5-amino-1-(5-phospho-beta-D-ribosyl)imidazole + ADP + phosphate + H(+). It functions in the pathway purine metabolism; IMP biosynthesis via de novo pathway; 5-amino-1-(5-phospho-D-ribosyl)imidazole from N(2)-formyl-N(1)-(5-phospho-D-ribosyl)glycinamide: step 2/2. In Listeria monocytogenes serotype 4b (strain CLIP80459), this protein is Phosphoribosylformylglycinamidine cyclo-ligase.